The chain runs to 106 residues: UPF0145 protein PputGB1_2909 (106 aa).

This sequence belongs to the UPF0145 family.

The chain is UPF0145 protein PputGB1_2909 from Pseudomonas putida (strain GB-1).